The primary structure comprises 277 residues: Large ribosomal subunit protein uL2 (277 aa).

Disordered regions lie at residues 35–57 and 222–277; these read RPLH…QGGG and GVAM…NRRR. 2 stretches are compositionally biased toward basic residues: residues 37 to 57 and 268 to 277; these read LHSK…QGGG and VRRRKQNRRR.

This sequence belongs to the universal ribosomal protein uL2 family. In terms of assembly, part of the 50S ribosomal subunit. Forms a bridge to the 30S subunit in the 70S ribosome.

One of the primary rRNA binding proteins. Required for association of the 30S and 50S subunits to form the 70S ribosome, for tRNA binding and peptide bond formation. It has been suggested to have peptidyltransferase activity; this is somewhat controversial. Makes several contacts with the 16S rRNA in the 70S ribosome. This Frankia casuarinae (strain DSM 45818 / CECT 9043 / HFP020203 / CcI3) protein is Large ribosomal subunit protein uL2.